The sequence spans 82 residues: MPRKKTENFNFEASLNELTALVEKLEQGDLTLEESLQNFERGVGLVRSCQQALSDAEQKVKVLINQDGAETLVPFELETKTD.

It belongs to the XseB family. In terms of assembly, heterooligomer composed of large and small subunits.

It is found in the cytoplasm. The enzyme catalyses Exonucleolytic cleavage in either 5'- to 3'- or 3'- to 5'-direction to yield nucleoside 5'-phosphates.. Its function is as follows. Bidirectionally degrades single-stranded DNA into large acid-insoluble oligonucleotides, which are then degraded further into small acid-soluble oligonucleotides. The polypeptide is Exodeoxyribonuclease 7 small subunit (Coxiella burnetii (strain CbuG_Q212) (Coxiella burnetii (strain Q212))).